A 268-amino-acid polypeptide reads, in one-letter code: Satratoxin biosynthesis SC1 cluster protein 4 (268 aa).

Helical transmembrane passes span 34 to 54 (VWLV…VHIF), 78 to 98 (LFAI…GLAI), 113 to 133 (HLAG…IKIV), and 145 to 165 (AVIW…APIY).

Belongs to the SAT4 family.

The protein localises to the membrane. It participates in mycotoxin biosynthesis. Functionally, part of the satratoxin SC1 cluster involved in the biosynthesis of satratoxins, trichothecene mycotoxins that are associated with human food poisonings. Satratoxins are suggested to be made by products of multiple gene clusters (SC1, SC2 and SC3) that encode 21 proteins in all, including polyketide synthases, acetyltransferases, and other enzymes expected to modify the trichothecene skeleton. SC1 encodes 10 proteins, SAT1 to SAT10. The largest are SAT8, which encodes a putative polyketide synthase (PKS) with a conventional non-reducing architecture, and SAT10, a putative protein containing four ankyrin repeats and thus may be involved in protein scaffolding. The putative short-chain reductase SAT3 may assist the PKS in some capacity. SAT6 contains a secretory lipase domain and acts probably as a trichothecene esterase. SAT5 encodes a putative acetyltransferase, and so, with SAT6, may affect endogenous protection from toxicity. The probable transcription factor SAT9 may regulate the expression of the SC1 cluster. SC2 encodes proteins SAT11 to SAT16, the largest of which encodes the putative reducing PKS SAT13. SAT11 is a cytochrome P450 monooxygenase, while SAT14 and SAT16 are probable acetyltransferases. The SC2 cluster may be regulated by the transcription factor SAT15. SC3 is a small cluster that encodes 5 proteins, SAT17 to SAT21. SAT21 is a putative MFS-type transporter which may have a role in exporting secondary metabolites. The four other proteins putatively encoded in SC3 include the taurine hydroxylase-like protein SAT17, the O-methyltransferase SAT18, the acetyltransferase SAT19, and the Cys6-type zinc finger SAT20, the latter being probably involved in regulation of SC3 expression. This is Satratoxin biosynthesis SC1 cluster protein 4 from Stachybotrys chartarum (strain CBS 109288 / IBT 7711) (Toxic black mold).